The chain runs to 141 residues: uncharacterized protein (141 aa).

This is an uncharacterized protein from Thermoproteus tenax (TTV1).